The sequence spans 658 residues: NUAK family SNF1-like kinase 1 (658 aa).

At Met1 the chain carries N-acetylmethionine. Residues 1–53 (MEGAAVSAAGDGPAVETGLPGSPLEAVAGATAAPVEPRKPHGVKRHHHKHNLK) are disordered. A Phosphoserine modification is found at Ser22. Over residues 40–53 (PHGVKRHHHKHNLK) the composition is skewed to basic residues. The 252-residue stretch at 56 to 307 (YELQETLGKG…IEDIANHWWV (252 aa)) folds into the Protein kinase domain. ATP is bound by residues 62–70 (LGKGTYGKV) and Lys85. Asp179 functions as the Proton acceptor in the catalytic mechanism. Thr212 is modified (phosphothreonine; by LKB1). Disordered regions lie at residues 353-422 (LAKP…EGIV) and 441-568 (IPLP…SYSR). Polar residues predominate over residues 378-393 (FPQSGQDSVPESPSKL). The segment covering 394 to 405 (SSKRPKGILKKR) has biased composition (basic residues). Residues 400-403 (GILK) carry the GILK motif motif. Ser456 carries the post-translational modification Phosphoserine. The span at 519–530 (SCRRKGILKHSS) shows a compositional bias: basic residues. The segment covering 559-568 (SDGISRSYSR) has biased composition (low complexity). At Ser601 the chain carries Phosphoserine; by PKB/AKT1.

The protein belongs to the protein kinase superfamily. CAMK Ser/Thr protein kinase family. SNF1 subfamily. In terms of assembly, interacts (via GILK motif) with PPP1CB; the interaction is direct and bridges NUAK1 and PPP1R12A. Interacts with CDKN1A. It depends on Mg(2+) as a cofactor. Phosphorylated at Thr-212 by STK11/LKB1 in complex with STE20-related adapter-alpha (STRADA) pseudo kinase and CAB39. Not dephosphorylated by the myosin PP1 complex when regulating its activity, due to the presence of PPP1R12A, which prevents myosin PP1 from dephosphorylating NUAK1. Phosphorylated by STK38L upon stimulation with IGF1. Post-translationally, ubiquitinated with 'Lys-29'- and 'Lys-33'-linked polyubiquitins which appear to impede LKB1-mediated phosphorylation. Deubiquitinated by USP9X. As to expression, expressed in the developing central nervous system, in epidermis, and some other tissues.

The protein resides in the nucleus. Its subcellular location is the cytoplasm. The catalysed reaction is L-seryl-[protein] + ATP = O-phospho-L-seryl-[protein] + ADP + H(+). It catalyses the reaction L-threonyl-[protein] + ATP = O-phospho-L-threonyl-[protein] + ADP + H(+). Activated by phosphorylation on Thr-212. Activated by phosphorylation at Ser-601 AKT1 during glucose starvation; the relevance of such activation in normal cells is however unsure. In terms of biological role, serine/threonine-protein kinase involved in various processes such as cell adhesion, regulation of cell ploidy and senescence, cell proliferation and tumor progression. Phosphorylates ATM, CASP6, LATS1, PPP1R12A and p53/TP53. Acts as a regulator of cellular senescence and cellular ploidy by mediating phosphorylation of 'Ser-464' of LATS1, thereby controlling its stability. Controls cell adhesion by regulating activity of the myosin protein phosphatase 1 (PP1) complex. Acts by mediating phosphorylation of PPP1R12A subunit of myosin PP1: phosphorylated PPP1R12A then interacts with 14-3-3, leading to reduced dephosphorylation of myosin MLC2 by myosin PP1. May be involved in DNA damage response: phosphorylates p53/TP53 at 'Ser-15' and 'Ser-392' and is recruited to the CDKN1A/WAF1 promoter to participate in transcription activation by p53/TP53. May also act as a tumor malignancy-associated factor by promoting tumor invasion and metastasis under regulation and phosphorylation by AKT1. Suppresses Fas-induced apoptosis by mediating phosphorylation of CASP6, thereby suppressing the activation of the caspase and the subsequent cleavage of CFLAR. Regulates UV radiation-induced DNA damage response mediated by CDKN1A. In association with STK11, phosphorylates CDKN1A in response to UV radiation and contributes to its degradation which is necessary for optimal DNA repair. This chain is NUAK family SNF1-like kinase 1 (Nuak1), found in Mus musculus (Mouse).